A 901-amino-acid polypeptide reads, in one-letter code: Probable inorganic carbon transporter subunit DabA (901 aa).

Residues Cys-424, Asp-426, His-606, and Cys-621 each contribute to the Zn(2+) site.

Belongs to the inorganic carbon transporter (TC 9.A.2) DabA family. In terms of assembly, forms a complex with DabB. The cofactor is Zn(2+).

Its subcellular location is the cell membrane. Part of an energy-coupled inorganic carbon pump. The polypeptide is Probable inorganic carbon transporter subunit DabA (Staphylococcus aureus (strain NCTC 8325 / PS 47)).